A 347-amino-acid polypeptide reads, in one-letter code: Tetraacyldisaccharide 4'-kinase (347 aa).

Residue 65–72 (FVGGTGKT) participates in ATP binding.

Belongs to the LpxK family.

It catalyses the reaction a lipid A disaccharide + ATP = a lipid IVA + ADP + H(+). It functions in the pathway glycolipid biosynthesis; lipid IV(A) biosynthesis; lipid IV(A) from (3R)-3-hydroxytetradecanoyl-[acyl-carrier-protein] and UDP-N-acetyl-alpha-D-glucosamine: step 6/6. Functionally, transfers the gamma-phosphate of ATP to the 4'-position of a tetraacyldisaccharide 1-phosphate intermediate (termed DS-1-P) to form tetraacyldisaccharide 1,4'-bis-phosphate (lipid IVA). This Janthinobacterium sp. (strain Marseille) (Minibacterium massiliensis) protein is Tetraacyldisaccharide 4'-kinase.